Consider the following 158-residue polypeptide: NAD(P)H-quinone oxidoreductase subunit J, chloroplastic (158 aa).

This sequence belongs to the complex I 30 kDa subunit family. In terms of assembly, NDH is composed of at least 16 different subunits, 5 of which are encoded in the nucleus.

The protein resides in the plastid. Its subcellular location is the chloroplast thylakoid membrane. The catalysed reaction is a plastoquinone + NADH + (n+1) H(+)(in) = a plastoquinol + NAD(+) + n H(+)(out). The enzyme catalyses a plastoquinone + NADPH + (n+1) H(+)(in) = a plastoquinol + NADP(+) + n H(+)(out). NDH shuttles electrons from NAD(P)H:plastoquinone, via FMN and iron-sulfur (Fe-S) centers, to quinones in the photosynthetic chain and possibly in a chloroplast respiratory chain. The immediate electron acceptor for the enzyme in this species is believed to be plastoquinone. Couples the redox reaction to proton translocation, and thus conserves the redox energy in a proton gradient. The chain is NAD(P)H-quinone oxidoreductase subunit J, chloroplastic from Trachelium caeruleum (Blue throatwort).